Here is a 467-residue protein sequence, read N- to C-terminus: uncharacterized protein (467 aa).

A disordered region spans residues 416 to 467 (KQQRAQTAVVGTTKELVSKATHMKPPRTPPGEAEHRKRSQSLAICQWNKNSR). Residues 455–467 (QSLAICQWNKNSR) are compositionally biased toward polar residues.

This is an uncharacterized protein from Homo sapiens (Human).